A 103-amino-acid polypeptide reads, in one-letter code: Urease subunit beta (103 aa).

The protein belongs to the urease beta subunit family. Heterotrimer of UreA (gamma), UreB (beta) and UreC (alpha) subunits. Three heterotrimers associate to form the active enzyme.

The protein localises to the cytoplasm. The enzyme catalyses urea + 2 H2O + H(+) = hydrogencarbonate + 2 NH4(+). It functions in the pathway nitrogen metabolism; urea degradation; CO(2) and NH(3) from urea (urease route): step 1/1. Ureolysis may allow urea to be employed as a nitrogen source for growth and produces ammonia which may protect from killing at low pH. The sequence is that of Urease subunit beta from Streptococcus salivarius (strain 57.I).